A 582-amino-acid chain; its full sequence is MAAAMPLGLPLRLLVLLLVGRGCCGCAEGPRDSLREELVITPLPSGDVAATFQFRTRWDSDLQREGVSHYRLFPKALGQLISKYSLRELHLSFTQGFWRTRYWGPPFLQAPSGAELWVWFQDTVTDVDKSWRELSNVLSGIFCASLNFIDATNTVTPTASFKPLGLANDTDDYFLRYAVLPREVVCTENLTPWKKLLPCSSKAGLSVLLKADRLFHTSYHSQAVHIRPICRNAHCTSISWELRQTLSVVFDAFITGQGKKDWSLFRMFSRTLTEACPLASQSLVYVDITGYSQDNETLEVSPPPTSTYQDVILGTRKTYAVYDLFDTAMINNSRNLNIQLKWKRPPDNEALPVPFLHAQRYVSGYGLQKGELSTLLYNSHPYRAFPVLLLDVVPWYLRLYVHTLTITSKGKENKPSYIHYQPAQDRQQPHLLEMLIQLPANSVTKVSIQFERALLKWTEYTPDPNHGFYVSPSVLSALVPSVVAAKPVDWEGSPLFNTLFPVSDGSSYFVRLYTEPLLVNLPTPDFSMPYNVICLTCTVVAVCYGSFYNLLTRTFHIEEPKSGGLAKRLANLIRRARGVPPL.

The first 25 residues, 1 to 25, serve as a signal peptide directing secretion; it reads MAAAMPLGLPLRLLVLLLVGRGCCG. The Lumenal portion of the chain corresponds to 26-529; it reads CAEGPRDSLR…NLPTPDFSMP (504 aa). N168 carries an N-linked (GlcNAc...) asparagine glycan. 2 cysteine pairs are disulfide-bonded: C199-C276 and C230-C235. N-linked (GlcNAc...) asparagine glycosylation is found at N295 and N331. A 2-acyl-6-[6-phosphoethanolamine-alpha-D-mannosyl-(1-&gt;2)-6-phosphoethanolamine-alpha-D-mannosyl-(1-&gt;6)-2-phosphoethanolamine-alpha-D-mannosyl-(1-&gt;4)-alpha-D-glucosaminyl]-1-(1-radyl,2-acyl-sn-glycero-3-phospho)-1D-myo-inositol-binding residues include N465, D525, S527, and N531. A helical transmembrane segment spans residues 530–552; the sequence is YNVICLTCTVVAVCYGSFYNLLT. Topologically, residues 553 to 582 are cytoplasmic; the sequence is RTFHIEEPKSGGLAKRLANLIRRARGVPPL.

It belongs to the PIGT family. As to quaternary structure, heteropentamer. Part of the GPI-anchor transamidase complex, consisting of PIGK, PIGT, PIGS, PIGU and GAA1. The disulfide bond between PIGK/GPI8 and PIGT is important for normal enzyme activity.

The protein localises to the endoplasmic reticulum membrane. The protein operates within glycolipid biosynthesis; glycosylphosphatidylinositol-anchor biosynthesis. Its function is as follows. Component of the glycosylphosphatidylinositol-anchor (GPI-anchor) transamidase (GPI-T) complex that catalyzes the formation of the linkage between a proprotein and a GPI-anchor and participates in GPI anchored protein biosynthesis. May play a crucial role in GPI-T complex assembly in the luminal layer. Binds GPI-anchor. This Mus musculus (Mouse) protein is GPI-anchor transamidase component PIGT.